The chain runs to 385 residues: 1-deoxy-D-xylulose 5-phosphate reductoisomerase (385 aa).

The NADPH site is built by threonine 10, glycine 11, serine 12, isoleucine 13, lysine 37, and asparagine 124. Lysine 125 contributes to the 1-deoxy-D-xylulose 5-phosphate binding site. Glutamate 126 provides a ligand contact to NADPH. Residue aspartate 150 participates in Mn(2+) binding. 1-deoxy-D-xylulose 5-phosphate contacts are provided by serine 151, glutamate 152, serine 176, and histidine 199. Glutamate 152 lines the Mn(2+) pocket. NADPH is bound at residue glycine 205. The 1-deoxy-D-xylulose 5-phosphate site is built by serine 212, asparagine 217, lysine 218, and glutamate 221. A Mn(2+)-binding site is contributed by glutamate 221.

The protein belongs to the DXR family. Requires Mg(2+) as cofactor. Mn(2+) serves as cofactor.

It catalyses the reaction 2-C-methyl-D-erythritol 4-phosphate + NADP(+) = 1-deoxy-D-xylulose 5-phosphate + NADPH + H(+). It participates in isoprenoid biosynthesis; isopentenyl diphosphate biosynthesis via DXP pathway; isopentenyl diphosphate from 1-deoxy-D-xylulose 5-phosphate: step 1/6. In terms of biological role, catalyzes the NADPH-dependent rearrangement and reduction of 1-deoxy-D-xylulose-5-phosphate (DXP) to 2-C-methyl-D-erythritol 4-phosphate (MEP). This is 1-deoxy-D-xylulose 5-phosphate reductoisomerase from Clostridium botulinum (strain Langeland / NCTC 10281 / Type F).